Here is a 481-residue protein sequence, read N- to C-terminus: OTU domain-containing protein 1 (481 aa).

2 disordered regions span residues 18 to 60 (PTAA…AAAE) and 202 to 282 (LAAA…IVSR). The span at 38–58 (PPGAAGAAPEPETGECQPAAA) shows a compositional bias: low complexity. Over residues 225 to 257 (GEEHLAERGPRGWERGGDRCDAPGGDAARRPDP) the composition is skewed to basic and acidic residues. Low complexity predominate over residues 261–281 (APPAGSIEAAPSSAAEPVIVS). An OTU domain is found at 309-438 (KYRFHIIPDG…NGHYDAVFDH (130 aa)). Residues 314 to 320 (IIPDGNC) form a cys-loop region. Residue Asp-317 is part of the active site. Cys-320 serves as the catalytic Nucleophile. A his-loop region spans residues 369 to 379 (AAQDGAWAGYP). Residues 426–431 (WLSNGH) are variable-loop. The active site involves His-431. Residues 457–476 (KRDEELAKSMAISLSKMYIE) enclose the UIM domain.

The catalysed reaction is Thiol-dependent hydrolysis of ester, thioester, amide, peptide and isopeptide bonds formed by the C-terminal Gly of ubiquitin (a 76-residue protein attached to proteins as an intracellular targeting signal).. Its function is as follows. Deubiquitinating enzyme that specifically hydrolyzes 'Lys-63'-linked polyubiquitin to monoubiquitin. Required for the stability and translation of a subset mRNAs with a high abundance of rare codons by mediating deubiquitination of 40S ribosomal protein RPS10/eS10, thereby antagonizing ZNF598-mediated 40S ubiquitination. The abundance of rare codons in mRNAs can limit the translation rate and can lead to ribosome collisions that trigger activation of ribosome quality control (RQC) pathway by ZNF598. OTUD1-mediated deubiquitination prevents activation of the RQC and subsequent dissociation of ribosomes and stimulates formation of polysomes and translation. The polypeptide is OTU domain-containing protein 1 (Homo sapiens (Human)).